Consider the following 379-residue polypeptide: Salicylate/benzoate carboxyl methyltransferase (379 aa).

Tyrosine 40 is a binding site for S-adenosyl-L-homocysteine. Glutamine 47 provides a ligand contact to salicylate. Residues cysteine 82, asparagine 87, aspartate 119, leucine 120, serine 155, and phenylalanine 156 each contribute to the S-adenosyl-L-homocysteine site. The salicylate site is built by histidine 176 and tryptophan 177. 4 residues coordinate Mg(2+): asparagine 188, aspartate 275, phenylalanine 277, and asparagine 278.

It belongs to the methyltransferase superfamily. Type-7 methyltransferase family. SABATH subfamily. As to quaternary structure, homodimer. Requires Mg(2+) as cofactor. As to expression, expressed in flowers and at lower levels in leaves and stems. Hardly detected in roots and siliques. Expressed in the sepals and the leaf trichomes and hydathodes.

The catalysed reaction is benzoate + S-adenosyl-L-methionine = methyl benzoate + S-adenosyl-L-homocysteine. It carries out the reaction salicylate + S-adenosyl-L-methionine = methyl salicylate + S-adenosyl-L-homocysteine. Functionally, methyltransferase involved in the biosynthesis of methylsalicylate in response to stresses. Utilizes salicylic acid (SA) more efficiently than benzoic acid (BA). Can also use anthranilic acid and m-hydroxybenzoic acid as substrate. The protein is Salicylate/benzoate carboxyl methyltransferase (BSMT1) of Arabidopsis thaliana (Mouse-ear cress).